Consider the following 291-residue polypeptide: Acetyl-coenzyme A carboxylase carboxyl transferase subunit beta (291 aa).

The disordered stretch occupies residues 1-23 (MSWLSKLMPSGIRTDNTPSKKRS). In terms of domain architecture, CoA carboxyltransferase N-terminal spans 28-291 (LWEKCSNCGS…LGRQPAPEVA (264 aa)). Residues C32, C35, C51, and C54 each contribute to the Zn(2+) site. The C4-type zinc finger occupies 32 to 54 (CSNCGSALYRPELEENLEVCPKC).

It belongs to the AccD/PCCB family. In terms of assembly, acetyl-CoA carboxylase is a heterohexamer composed of biotin carboxyl carrier protein (AccB), biotin carboxylase (AccC) and two subunits each of ACCase subunit alpha (AccA) and ACCase subunit beta (AccD). Requires Zn(2+) as cofactor.

It is found in the cytoplasm. The catalysed reaction is N(6)-carboxybiotinyl-L-lysyl-[protein] + acetyl-CoA = N(6)-biotinyl-L-lysyl-[protein] + malonyl-CoA. It participates in lipid metabolism; malonyl-CoA biosynthesis; malonyl-CoA from acetyl-CoA: step 1/1. Component of the acetyl coenzyme A carboxylase (ACC) complex. Biotin carboxylase (BC) catalyzes the carboxylation of biotin on its carrier protein (BCCP) and then the CO(2) group is transferred by the transcarboxylase to acetyl-CoA to form malonyl-CoA. In Stenotrophomonas maltophilia (strain K279a), this protein is Acetyl-coenzyme A carboxylase carboxyl transferase subunit beta.